Here is a 49-residue protein sequence, read N- to C-terminus: Photosystem I reaction center subunit IX (49 aa).

The helical transmembrane segment at 14-34 (FISTAPVAATIWLTITAGILI) threads the bilayer.

It belongs to the PsaJ family.

It is found in the cellular thylakoid membrane. May help in the organization of the PsaE and PsaF subunits. The chain is Photosystem I reaction center subunit IX from Nostoc punctiforme (strain ATCC 29133 / PCC 73102).